The primary structure comprises 358 residues: MATIVVAMSGGVDSSAVAAMLHEQGHHVIGITLQLYDYGIAVGKKNACCAGKDIYDAKMVANKLGIPHYVLDYENKFKESVIDNFVNSYLHGETPLPCVQCNKLVKFRDLINTAKELGADKLATGHYVRKINGYNGAELHTGLDAAKDQSYFLFTITREQLEYLIFPLGGFTKYETRKLASKFGLDVADKPDSQDICFVPDGNYKTVINKIRPEASTSGKIVHINGFELGEHSGIINYTIGQRRGLGIAYNEPLYVVKIDPSNNIVYVGQESALHVHEFIIKDVNWLADEIKDNEKLAVDVKIRSTRPPCHAEISKLCNDKIKVQFLSAEKAVAPGQACVIYAGERVLGGGWITRNIR.

ATP-binding positions include Ala7–Ser14 and Leu33. Cys101 acts as the Nucleophile in catalysis. Cys101 and Cys197 are oxidised to a cystine. Gly125 serves as a coordination point for ATP. The segment at Lys147–Gln149 is interaction with tRNA. The active-site Cysteine persulfide intermediate is Cys197.

It belongs to the MnmA/TRMU family.

The protein resides in the cytoplasm. The catalysed reaction is S-sulfanyl-L-cysteinyl-[protein] + uridine(34) in tRNA + AH2 + ATP = 2-thiouridine(34) in tRNA + L-cysteinyl-[protein] + A + AMP + diphosphate + H(+). Catalyzes the 2-thiolation of uridine at the wobble position (U34) of tRNA, leading to the formation of s(2)U34. This Rickettsia typhi (strain ATCC VR-144 / Wilmington) protein is tRNA-specific 2-thiouridylase MnmA.